The sequence spans 154 residues: Peptidoglycan amidase Tse1 (154 aa).

Cysteines 7 and 148 form a disulfide. The active-site Nucleophile is cysteine 30. Histidine 91 functions as the Proton acceptor in the catalytic mechanism.

In terms of assembly, forms a heterotetramer with Tsi1 consisting of two Tse1 dimers and two Tsi1 dimers. Formation of the complex inactivates Tse1 enzymatic activity.

It localises to the host membrane. Its subcellular location is the secreted. The enzyme catalyses Hydrolysis of gamma-D-glutamyl bonds to the L-terminus (position 7) of meso-diaminopimelic acid (meso-A2pm) in 7-(L-Ala-gamma-D-Glu)-meso-A2pm and 7-(L-Ala-gamma-D-Glu)-7-(D-Ala)-meso-A2pm. It is required that the D-terminal amino and carboxy groups of meso-A2pm are unsubstituted.. Its function is as follows. Toxin secreted by the H1 type VI (H1-T6SS) secretion system into the periplasm of recipient cells. Degrades peptidoglycan via amidase activity thereby helping itself to compete with other bacteria. To protect itself, the bacterium synthesizes immunity protein Tsi1 that specifically interacts with and inactivates cognate toxin. The protein is Peptidoglycan amidase Tse1 of Pseudomonas aeruginosa (strain ATCC 15692 / DSM 22644 / CIP 104116 / JCM 14847 / LMG 12228 / 1C / PRS 101 / PAO1).